Reading from the N-terminus, the 495-residue chain is MELSLSTLFDSEILSDLTIEFVDNHTKSKVHFHKNILYLGCSYFRSMFNRFSESNSREIVIKVPDVNASIDIIKYFYGIETTNDYWKYVLNTYVCKKFFGLETEFPANITVVSDDIEEFLDFIDKMGYDDNTLKLIAKNIPESYNLQTFPKYFIKTLFRVLDTKYLILVFGHEIILVDINGTTYKSIKFDTSIKGACHIQNTNKIAYRTDNIIRVYDFEENKIVFEKKNSYTHRICSANGKLFIGDNSRVEEINPINGESYRFFRSTYDEKIILEVFYDNEFIIVFGQPHVHSLRIKTLICFYDMKMGGKIRSFYYDGNVDMLEYCPVNKCMFFCENHKKTGKIYRVCFYDSSIKIFTRKELVYESKYSKIIKIIWISTKCSLIFCCENGTIGTYCIMTNETKILTDINDKIKDAVLIKHNILAILSPNTVHIIDINKCGDNANINKFNVSSDIVKIMSTSSINTKLANKISDLLDDIDDESDDDSDDDIITTKN.

The region spanning 15–85 is the BTB domain; the sequence is SDLTIEFVDN…FYGIETTNDY (71 aa).

This sequence belongs to the mimivirus BTB/WD family.

This chain is Putative BTB/POZ domain-containing protein L98, found in Acanthamoeba polyphaga (Amoeba).